The primary structure comprises 108 residues: UPF0145 protein THA_1434 (108 aa).

It belongs to the UPF0145 family.

The protein is UPF0145 protein THA_1434 of Thermosipho africanus (strain TCF52B).